The following is a 249-amino-acid chain: uncharacterized protein (249 aa).

The protein belongs to the chlamydial CPn_0206/CT203/TC_0475 family.

This is an uncharacterized protein from Chlamydia muridarum (strain MoPn / Nigg).